Reading from the N-terminus, the 484-residue chain is Mitogen-activated protein kinase SLT2/MPK1 (484 aa).

Residues F23–L318 form the Protein kinase domain. Residues I29–V37 and K54 each bind ATP. The active-site Proton acceptor is the D153. Phosphothreonine is present on T190. The short motif at T190–Y192 is the TXY element. Y192 is subject to Phosphotyrosine. Residues Q383–P392 are compositionally biased toward low complexity. Disordered stretches follow at residues Q383–S403 and I426–D464.

This sequence belongs to the protein kinase superfamily. CMGC Ser/Thr protein kinase family. MAP kinase subfamily. As to quaternary structure, interacts with RLM1. Mg(2+) is required as a cofactor. Post-translationally, dually phosphorylated on Thr-190 and Tyr-192, which activates the enzyme.

The catalysed reaction is L-seryl-[protein] + ATP = O-phospho-L-seryl-[protein] + ADP + H(+). It carries out the reaction L-threonyl-[protein] + ATP = O-phospho-L-threonyl-[protein] + ADP + H(+). Its activity is regulated as follows. Activated by tyrosine and threonine phosphorylation by MKK1 and MKK2. Its function is as follows. Serine/threonine protein kinase involved in a signal transduction pathway that plays a role in yeast cell morphogenesis and cell growth. This pathway seems to start by SMP3; then involve the kinase PKC1 that may act the BCK1 kinase that then phosphorylates MKK1 and MKK2 which themselves phosphorylate the SLT2/MPK1 kinase which itself then phosphorylates and activates the transcription factor RLM1. Directly phosphorylates BCY1 upon TOR complex 1 (TORC1) inhibition. The protein is Mitogen-activated protein kinase SLT2/MPK1 (SLT2) of Saccharomyces cerevisiae (strain ATCC 204508 / S288c) (Baker's yeast).